The sequence spans 641 residues: tRNA 5-methylaminomethyl-2-thiouridine biosynthesis bifunctional protein MnmC (641 aa).

The tract at residues 1 to 219 (MTVSKILKQI…PYPICSAAVT (219 aa)) is tRNA (mnm(5)s(2)U34)-methyltransferase. The tract at residues 232–641 (IGGGVASACL…GKALEVGVEV (410 aa)) is FAD-dependent cmnm(5)s(2)U34 oxidoreductase.

This sequence in the N-terminal section; belongs to the methyltransferase superfamily. tRNA (mnm(5)s(2)U34)-methyltransferase family. It in the C-terminal section; belongs to the DAO family. The cofactor is FAD.

The protein localises to the cytoplasm. The catalysed reaction is 5-aminomethyl-2-thiouridine(34) in tRNA + S-adenosyl-L-methionine = 5-methylaminomethyl-2-thiouridine(34) in tRNA + S-adenosyl-L-homocysteine + H(+). Its function is as follows. Catalyzes the last two steps in the biosynthesis of 5-methylaminomethyl-2-thiouridine (mnm(5)s(2)U) at the wobble position (U34) in tRNA. Catalyzes the FAD-dependent demodification of cmnm(5)s(2)U34 to nm(5)s(2)U34, followed by the transfer of a methyl group from S-adenosyl-L-methionine to nm(5)s(2)U34, to form mnm(5)s(2)U34. This is tRNA 5-methylaminomethyl-2-thiouridine biosynthesis bifunctional protein MnmC from Shewanella pealeana (strain ATCC 700345 / ANG-SQ1).